Here is a 96-residue protein sequence, read N- to C-terminus: Bublin coiled-coil protein (96 aa).

Residues 39–79 (NSCLDDIEDRNDALNGKLHELLESNRQARKDFRQQLNDEEA) are a coiled coil. The tract at residues 63–96 (NRQARKDFRQQLNDEEASPPPAEDPASRDTQTED) is disordered. Positions 87 to 96 (PASRDTQTED) are enriched in basic and acidic residues.

This sequence belongs to the UPF0184 (EST00098) family.

It is found in the cell junction. It localises to the cytoplasm. The protein resides in the cytoskeleton. Functionally, essential for intermediate filament organization in intestinal cells, interacts with intermediate filament and regulates intestinal lumen morphology. The polypeptide is Bublin coiled-coil protein (bbln) (Ctenopharyngodon idella (Grass carp)).